The sequence spans 466 residues: Ribulose bisphosphate carboxylase large chain (466 aa).

The residue at position 5 (Lys-5) is an N6,N6,N6-trimethyllysine. Substrate is bound by residues Asn-114 and Thr-164. Lys-166 (proton acceptor) is an active-site residue. Residue Lys-168 coordinates substrate. Positions 192, 194, and 195 each coordinate Mg(2+). An N6-carboxylysine modification is found at Lys-192. His-285 serves as the catalytic Proton acceptor. Substrate is bound by residues Arg-286, His-318, and Ser-370.

Belongs to the RuBisCO large chain family. Type I subfamily. In terms of assembly, heterohexadecamer of 8 large chains and 8 small chains; disulfide-linked. The disulfide link is formed within the large subunit homodimers. Mg(2+) is required as a cofactor. In terms of processing, the disulfide bond which can form in the large chain dimeric partners within the hexadecamer appears to be associated with oxidative stress and protein turnover.

It localises to the plastid. The protein resides in the chloroplast. It catalyses the reaction 2 (2R)-3-phosphoglycerate + 2 H(+) = D-ribulose 1,5-bisphosphate + CO2 + H2O. The enzyme catalyses D-ribulose 1,5-bisphosphate + O2 = 2-phosphoglycolate + (2R)-3-phosphoglycerate + 2 H(+). Its function is as follows. RuBisCO catalyzes two reactions: the carboxylation of D-ribulose 1,5-bisphosphate, the primary event in carbon dioxide fixation, as well as the oxidative fragmentation of the pentose substrate in the photorespiration process. Both reactions occur simultaneously and in competition at the same active site. In Hedera helix (English ivy), this protein is Ribulose bisphosphate carboxylase large chain.